Here is a 1141-residue protein sequence, read N- to C-terminus: Isoleucine--tRNA ligase (1141 aa).

The 'HIGH' region signature appears at P50–H60. The 'KMSKS' region signature appears at K689–R693. K692 provides a ligand contact to ATP.

This sequence belongs to the class-I aminoacyl-tRNA synthetase family. IleS type 2 subfamily. In terms of assembly, monomer. It depends on Zn(2+) as a cofactor.

The protein localises to the cytoplasm. It carries out the reaction tRNA(Ile) + L-isoleucine + ATP = L-isoleucyl-tRNA(Ile) + AMP + diphosphate. Functionally, catalyzes the attachment of isoleucine to tRNA(Ile). As IleRS can inadvertently accommodate and process structurally similar amino acids such as valine, to avoid such errors it has two additional distinct tRNA(Ile)-dependent editing activities. One activity is designated as 'pretransfer' editing and involves the hydrolysis of activated Val-AMP. The other activity is designated 'posttransfer' editing and involves deacylation of mischarged Val-tRNA(Ile). This chain is Isoleucine--tRNA ligase, found in Bacteroides fragilis (strain ATCC 25285 / DSM 2151 / CCUG 4856 / JCM 11019 / LMG 10263 / NCTC 9343 / Onslow / VPI 2553 / EN-2).